Here is a 485-residue protein sequence, read N- to C-terminus: Poly(ADP-ribose) glycohydrolase 2 (485 aa).

Belongs to the poly(ADP-ribose) glycohydrolase family. In terms of tissue distribution, expressed in head and tail neurons.

It localises to the cytoplasm. It catalyses the reaction [(1''-&gt;2')-ADP-alpha-D-ribose](n) + H2O = [(1''-&gt;2')-ADP-alpha-D-ribose](n-1) + ADP-D-ribose. Poly(ADP-ribose) synthesized after DNA damage is only present transiently and is rapidly degraded by poly(ADP-ribose) glycohydrolase. Poly(ADP-ribose) metabolism may be required for maintenance of the normal function of neuronal cells. In Caenorhabditis elegans, this protein is Poly(ADP-ribose) glycohydrolase 2.